The primary structure comprises 77 residues: EMBRYO SURROUNDING FACTOR 1-like protein 9 (77 aa).

The signal sequence occupies residues Met1–Cys22. Disulfide bonds link Cys38/Cys54, Cys43/Cys75, Cys52/Cys71, and Cys55/Cys64.

It belongs to the MEG family. Expressed in flowers.

The protein is EMBRYO SURROUNDING FACTOR 1-like protein 9 (ESFL9) of Arabidopsis thaliana (Mouse-ear cress).